A 312-amino-acid polypeptide reads, in one-letter code: Ribosomal protein L11 methyltransferase (312 aa).

4 residues coordinate S-adenosyl-L-methionine: Thr163, Gly184, Asp206, and Asn248.

Belongs to the methyltransferase superfamily. PrmA family.

It localises to the cytoplasm. The catalysed reaction is L-lysyl-[protein] + 3 S-adenosyl-L-methionine = N(6),N(6),N(6)-trimethyl-L-lysyl-[protein] + 3 S-adenosyl-L-homocysteine + 3 H(+). Methylates ribosomal protein L11. In Clostridium botulinum (strain Okra / Type B1), this protein is Ribosomal protein L11 methyltransferase.